Reading from the N-terminus, the 334-residue chain is E3 ubiquitin-protein ligase ATL4 (334 aa).

Residues 1–20 (MESLINPSHGGGNYDSHSSS) are disordered. Residues 28–48 (VLVIILILLMTLLISVSICFL) traverse the membrane as a helical segment. The RING-type; atypical zinc finger occupies 117–159 (CAVCLSKFEPEDQLRLLPLCCHAFHADCIDIWLVSNQTCPLCR).

Belongs to the RING-type zinc finger family. ATL subfamily.

The protein resides in the membrane. The enzyme catalyses S-ubiquitinyl-[E2 ubiquitin-conjugating enzyme]-L-cysteine + [acceptor protein]-L-lysine = [E2 ubiquitin-conjugating enzyme]-L-cysteine + N(6)-ubiquitinyl-[acceptor protein]-L-lysine.. The protein operates within protein modification; protein ubiquitination. Its function is as follows. E3 ubiquitin-protein ligase able to catalyze polyubiquitination with ubiquitin-conjugating enzyme E2 UBC8 in vitro. The polypeptide is E3 ubiquitin-protein ligase ATL4 (Arabidopsis thaliana (Mouse-ear cress)).